Consider the following 222-residue polypeptide: Oligoribonuclease (222 aa).

Residues 19-38 (PMASSSSTGKQEESVNGSLE) are disordered. Positions 21–35 (ASSSSTGKQEESVNG) are enriched in polar residues. Residues 46–210 (LVWIDLEMTG…DDIRESIKEL (165 aa)) form the Exonuclease domain. The active site involves H167.

This sequence belongs to the oligoribonuclease family.

3'-to-5' exoribonuclease specific for small oligoribonucleotides. The sequence is that of Oligoribonuclease from Arabidopsis thaliana (Mouse-ear cress).